Consider the following 585-residue polypeptide: Chaperonin GroEL, chloroplastic (585 aa).

ATP contacts are provided by residues 55–58 (TLGP), 113–117 (DGTTT), Gly-442, 507–509 (NAA), and Asp-523.

This sequence belongs to the chaperonin (HSP60) family. As to quaternary structure, forms a cylinder of 14 subunits composed of two heptameric rings stacked back-to-back. Interacts with the co-chaperonin GroES.

It is found in the plastid. The protein resides in the chloroplast. The catalysed reaction is ATP + H2O + a folded polypeptide = ADP + phosphate + an unfolded polypeptide.. Together with its co-chaperonin GroES, plays an essential role in assisting protein folding. The GroEL-GroES system forms a nano-cage that allows encapsulation of the non-native substrate proteins and provides a physical environment optimized to promote and accelerate protein folding. This Pyrenomonas salina protein is Chaperonin GroEL, chloroplastic.